Reading from the N-terminus, the 405-residue chain is Argininosuccinate synthase (405 aa).

ATP-binding positions include 10-18 (AYSGGLDTS) and Ala37. Residues Tyr88 and Ser93 each contribute to the L-citrulline site. Gly118 is an ATP binding site. Residues Thr120, Asn124, and Asp125 each contribute to the L-aspartate site. Asn124 contributes to the L-citrulline binding site. 5 residues coordinate L-citrulline: Arg128, Ser177, Ser186, Glu263, and Tyr275.

Belongs to the argininosuccinate synthase family. Type 1 subfamily. Homotetramer.

It is found in the cytoplasm. It carries out the reaction L-citrulline + L-aspartate + ATP = 2-(N(omega)-L-arginino)succinate + AMP + diphosphate + H(+). It functions in the pathway amino-acid biosynthesis; L-arginine biosynthesis; L-arginine from L-ornithine and carbamoyl phosphate: step 2/3. In Acetivibrio thermocellus (strain ATCC 27405 / DSM 1237 / JCM 9322 / NBRC 103400 / NCIMB 10682 / NRRL B-4536 / VPI 7372) (Clostridium thermocellum), this protein is Argininosuccinate synthase.